The following is a 144-amino-acid chain: Sentan (144 aa).

A disordered region spans residues 1 to 31; it reads MCGCRASVPSTKHYSVNPAPTTRSPPAAAGM. The segment covering 18–29 has biased composition (low complexity); sequence PAPTTRSPPAAA.

This sequence belongs to the S-100 family.

The protein resides in the cell projection. It is found in the cilium. In terms of biological role, may be a component of the linker structure that bridges the ciliary membrane and peripheral singlet microtubules. The chain is Sentan from Gallus gallus (Chicken).